The following is a 75-amino-acid chain: Translation initiation factor IF-1 (75 aa).

Residues 1–72 form the S1-like domain; the sequence is MSKQDLIEME…TKGRITYRLK (72 aa).

Belongs to the IF-1 family. As to quaternary structure, component of the 30S ribosomal translation pre-initiation complex which assembles on the 30S ribosome in the order IF-2 and IF-3, IF-1 and N-formylmethionyl-tRNA(fMet); mRNA recruitment can occur at any time during PIC assembly.

It is found in the cytoplasm. In terms of biological role, one of the essential components for the initiation of protein synthesis. Stabilizes the binding of IF-2 and IF-3 on the 30S subunit to which N-formylmethionyl-tRNA(fMet) subsequently binds. Helps modulate mRNA selection, yielding the 30S pre-initiation complex (PIC). Upon addition of the 50S ribosomal subunit IF-1, IF-2 and IF-3 are released leaving the mature 70S translation initiation complex. The chain is Translation initiation factor IF-1 from Synechocystis sp. (strain ATCC 27184 / PCC 6803 / Kazusa).